The primary structure comprises 33 residues: Cytochrome b6-f complex subunit 8 (33 aa).

The helical transmembrane segment at 2 to 22 (IFQIGWAALAAIFTFSIAMVV) threads the bilayer.

The protein belongs to the PetN family. In terms of assembly, the 4 large subunits of the cytochrome b6-f complex are cytochrome b6, subunit IV (17 kDa polypeptide, PetD), cytochrome f and the Rieske protein, while the 4 small subunits are PetG, PetL, PetM and PetN. The complex functions as a dimer.

The protein localises to the cellular thylakoid membrane. Component of the cytochrome b6-f complex, which mediates electron transfer between photosystem II (PSII) and photosystem I (PSI), cyclic electron flow around PSI, and state transitions. This Prochlorococcus marinus (strain MIT 9301) protein is Cytochrome b6-f complex subunit 8.